The chain runs to 336 residues: Dihydroorotate dehydrogenase (quinone) (336 aa).

FMN-binding positions include 62 to 66 (AGLDK) and threonine 86. Residue lysine 66 participates in substrate binding. A substrate-binding site is contributed by 111–115 (NRMGF). Asparagine 139 and asparagine 172 together coordinate FMN. Asparagine 172 is a binding site for substrate. Serine 175 acts as the Nucleophile in catalysis. Asparagine 177 provides a ligand contact to substrate. Residues lysine 217 and threonine 245 each contribute to the FMN site. 246-247 (NT) is a binding site for substrate. Residues glycine 268, glycine 297, and 318–319 (YS) contribute to the FMN site.

This sequence belongs to the dihydroorotate dehydrogenase family. Type 2 subfamily. In terms of assembly, monomer. It depends on FMN as a cofactor.

It localises to the cell membrane. It catalyses the reaction (S)-dihydroorotate + a quinone = orotate + a quinol. Its pathway is pyrimidine metabolism; UMP biosynthesis via de novo pathway; orotate from (S)-dihydroorotate (quinone route): step 1/1. Its function is as follows. Catalyzes the conversion of dihydroorotate to orotate with quinone as electron acceptor. This Pectobacterium carotovorum subsp. carotovorum (strain PC1) protein is Dihydroorotate dehydrogenase (quinone).